The sequence spans 342 residues: ATP synthase subunit a (342 aa).

Helical transmembrane passes span 11-31 (GLIK…AFAS), 109-129 (HVVT…IIGS), 170-190 (YLPY…LGLV), 199-219 (NINV…IAAL), 238-258 (ALWI…PVAL), 262-282 (LFAN…ISFI), 287-307 (IVAV…EIFV), and 308-328 (AFLQ…LASA).

It belongs to the ATPase A chain family. In terms of assembly, F-type ATPases have 2 components, CF(1) - the catalytic core - and CF(0) - the membrane proton channel. CF(1) has five subunits: alpha(3), beta(3), gamma(1), delta(1), epsilon(1). CF(0) has four main subunits: a, b, b' and c.

The protein resides in the cell inner membrane. Functionally, key component of the proton channel; it plays a direct role in the translocation of protons across the membrane. This Chlorobium phaeobacteroides (strain DSM 266 / SMG 266 / 2430) protein is ATP synthase subunit a.